A 289-amino-acid chain; its full sequence is LBH domain-containing protein 1 (289 aa).

2 disordered regions span residues 1–36 (MALVPGRSKEDGLWTRNSPGSSQHPESPRLPNPLWD) and 205–289 (EGAE…ASQD). In terms of domain architecture, LBH spans 1 to 128 (MALVPGRSKE…AEAFFQDQSE (128 aa)). Residues 15–25 (TRNSPGSSQHP) show a composition bias toward polar residues.

As to expression, expressed in bladder cancer tissues (at protein level).

The chain is LBH domain-containing protein 1 from Homo sapiens (Human).